Here is a 423-residue protein sequence, read N- to C-terminus: L-cysteine:1D-myo-inositol 2-amino-2-deoxy-alpha-D-glucopyranoside ligase (423 aa).

C45 lines the Zn(2+) pocket. Residues 45-48 (CGIT), T60, and 83-85 (NVT) each bind L-cysteinyl-5'-AMP. The 'HIGH' region motif lies at 47–57 (ITPYDATHIGH). The 'ERGGDP' region motif lies at 197–202 (DRGGDP). W238 provides a ligand contact to L-cysteinyl-5'-AMP. Zn(2+) is bound at residue C242. 260–262 (GSD) is an L-cysteinyl-5'-AMP binding site. H267 contributes to the Zn(2+) binding site. I294 contacts L-cysteinyl-5'-AMP. The 'KMSKS' region motif lies at 300 to 304 (KMSKS).

The protein belongs to the class-I aminoacyl-tRNA synthetase family. MshC subfamily. As to quaternary structure, monomer. Zn(2+) serves as cofactor.

The catalysed reaction is 1D-myo-inositol 2-amino-2-deoxy-alpha-D-glucopyranoside + L-cysteine + ATP = 1D-myo-inositol 2-(L-cysteinylamino)-2-deoxy-alpha-D-glucopyranoside + AMP + diphosphate + H(+). Its function is as follows. Catalyzes the ATP-dependent condensation of GlcN-Ins and L-cysteine to form L-Cys-GlcN-Ins. The protein is L-cysteine:1D-myo-inositol 2-amino-2-deoxy-alpha-D-glucopyranoside ligase of Jonesia denitrificans (strain ATCC 14870 / DSM 20603 / BCRC 15368 / CIP 55.134 / JCM 11481 / NBRC 15587 / NCTC 10816 / Prevot 55134) (Listeria denitrificans).